Reading from the N-terminus, the 63-residue chain is Large ribosomal subunit protein uL29 (63 aa).

The protein belongs to the universal ribosomal protein uL29 family.

This chain is Large ribosomal subunit protein uL29, found in Neisseria meningitidis serogroup C (strain 053442).